Here is a 262-residue protein sequence, read N- to C-terminus: Putative hydro-lyase ROP_32680 (262 aa).

The protein belongs to the D-glutamate cyclase family.

The chain is Putative hydro-lyase ROP_32680 from Rhodococcus opacus (strain B4).